Reading from the N-terminus, the 429-residue chain is Ribosomal RNA small subunit methyltransferase B (429 aa).

S-adenosyl-L-methionine is bound by residues 254–260 (CAAPGGK), aspartate 277, aspartate 303, and aspartate 322. The active-site Nucleophile is cysteine 375.

This sequence belongs to the class I-like SAM-binding methyltransferase superfamily. RsmB/NOP family.

It is found in the cytoplasm. It carries out the reaction cytidine(967) in 16S rRNA + S-adenosyl-L-methionine = 5-methylcytidine(967) in 16S rRNA + S-adenosyl-L-homocysteine + H(+). Specifically methylates the cytosine at position 967 (m5C967) of 16S rRNA. In Yersinia enterocolitica serotype O:8 / biotype 1B (strain NCTC 13174 / 8081), this protein is Ribosomal RNA small subunit methyltransferase B.